We begin with the raw amino-acid sequence, 317 residues long: Adenosine receptor A3 (317 aa).

Topologically, residues 1–14 (MPVNSTAVSLASVT) are extracellular. Asparagine 4 carries N-linked (GlcNAc...) asparagine glycosylation. A helical membrane pass occupies residues 15–37 (YISVEILIGLCAIVGNVLVIWVV). Residues 38–48 (KLNPSLQTTTF) are Cytoplasmic-facing. A helical transmembrane segment spans residues 49–72 (YFIVSLALADIAVGVLVMPLAIVI). At 73-84 (SLGVTIHFYSCL) the chain is on the extracellular side. Cysteine 83 and cysteine 165 are disulfide-bonded. The chain crosses the membrane as a helical span at residues 85–106 (LMTCLLMIFTHASIMSLLAIAV). Residues 107–126 (DRYLRVKLTVRYRRVTTQRR) lie on the Cytoplasmic side of the membrane. A helical transmembrane segment spans residues 127–148 (IWLALGLCWLVSFLVGLTPMFG). Topologically, residues 149–176 (WNMKLSSADKNLTFLPCQFRSVMRMDYM) are extracellular. A helical membrane pass occupies residues 177 to 197 (VYFSFFTWILIPLVVMCAIYF). The Cytoplasmic segment spans residues 198-230 (DIFYVIRNRLSQNFSGSKETGAFYGREFKTAKS). A helical transmembrane segment spans residues 231 to 254 (LSLVLFLFALSWLPLSIINCIIYF). Residues 255 to 260 (NGEVPQ) are Extracellular-facing. Residues 261-283 (IVLYLGILLSHANSMMNPIVYAY) traverse the membrane as a helical segment. Topologically, residues 284–317 (KIKKFKETYLLILKACVICQPSKSMDPSIEQTSE) are cytoplasmic. Cysteine 302 carries S-palmitoyl cysteine lipidation.

The protein belongs to the G-protein coupled receptor 1 family. In terms of processing, phosphorylation on Thr-315 and Ser-316 may be crucial for rapid desensitization. Phosphorylation on Thr-315 may be necessary for phosphorylation on Ser-316 to occur.

Its subcellular location is the cell membrane. In terms of biological role, receptor for adenosine. The activity of this receptor is mediated by G proteins which inhibits adenylyl cyclase. The protein is Adenosine receptor A3 (ADORA3) of Bos taurus (Bovine).